A 164-amino-acid chain; its full sequence is Class I hydrophobin rodA (164 aa).

The N-terminal stretch at M1–A18 is a signal peptide. N50 is a glycosylation site (N-linked (GlcNAc...) asparagine). 4 disulfide bridges follow: C60/C138, C68/C132, C69/C109, and C139/C157.

It belongs to the fungal hydrophobin family. In terms of assembly, self-assembles to form functional amyloid fibrils called rodlets. Self-assembly into fibrillar rodlets occurs spontaneously at hydrophobic:hydrophilic interfaces and the rodlets further associate laterally to form amphipathic monolayers.

The protein localises to the secreted. It localises to the cell wall. In terms of biological role, aerial growth, conidiation, and dispersal of filamentous fungi in the environment rely upon a capability of their secreting small amphipathic proteins called hydrophobins (HPBs) with low sequence identity. Class I can self-assemble into an outermost layer of rodlet bundles on aerial cell surfaces, conferring cellular hydrophobicity that supports fungal growth, development and dispersal; whereas Class II form highly ordered films at water-air interfaces through intermolecular interactions but contribute nothing to the rodlet structure. RodA is a class I hydrophobin involved in the cell surface hydrophobicity. The surface rodlet layer of the conidial cell wall makes airborne conidia of filamentous fungi inert to both innate and adaptive immunity. The protein is Class I hydrophobin rodA of Penicillium camemberti (strain FM 013).